The chain runs to 114 residues: Pro-FMRFamide-related neuropeptide FF (114 aa).

Positions 1–21 are cleaved as a signal peptide; the sequence is MDSKWAAVLLLLLLLRNWGHA. The propeptide occupies 22–69; that stretch reads EEAGSWGEDQVFAEEDKGPHPSQYAHTPDRIQTPGSLMRVLLQAMERP. The segment at 29–51 is disordered; that stretch reads EDQVFAEEDKGPHPSQYAHTPDR. A Phenylalanine amide modification is found at Phe82. Residues 85–100 constitute a propeptide that is removed on maturation; the sequence is NAWGPWSKEQLSPQAR. Phe111 is subject to Phenylalanine amide.

The protein belongs to the FARP (FMRFamide related peptide) family.

The protein localises to the secreted. Its function is as follows. Morphine modulating peptides. Have wide-ranging physiologic effects, including the modulation of morphine-induced analgesia, elevation of arterial blood pressure, and increased somatostatin secretion from the pancreas. Neuropeptide FF and SF potentiate and sensitize ASIC2 and ASIC3 channels. This is Pro-FMRFamide-related neuropeptide FF (Npff) from Rattus norvegicus (Rat).